Here is a 238-residue protein sequence, read N- to C-terminus: 2-C-methyl-D-erythritol 4-phosphate cytidylyltransferase (238 aa).

It belongs to the IspD/TarI cytidylyltransferase family. IspD subfamily.

It catalyses the reaction 2-C-methyl-D-erythritol 4-phosphate + CTP + H(+) = 4-CDP-2-C-methyl-D-erythritol + diphosphate. It functions in the pathway isoprenoid biosynthesis; isopentenyl diphosphate biosynthesis via DXP pathway; isopentenyl diphosphate from 1-deoxy-D-xylulose 5-phosphate: step 2/6. In terms of biological role, catalyzes the formation of 4-diphosphocytidyl-2-C-methyl-D-erythritol from CTP and 2-C-methyl-D-erythritol 4-phosphate (MEP). In Aliivibrio fischeri (strain MJ11) (Vibrio fischeri), this protein is 2-C-methyl-D-erythritol 4-phosphate cytidylyltransferase.